A 387-amino-acid polypeptide reads, in one-letter code: Acetylornithine aminotransferase (387 aa).

Pyridoxal 5'-phosphate-binding positions include 97–98 (GT) and F130. A N(2)-acetyl-L-ornithine-binding site is contributed by R133. 215 to 218 (DEVQ) is a pyridoxal 5'-phosphate binding site. Position 244 is an N6-(pyridoxal phosphate)lysine (K244). Residue T273 participates in pyridoxal 5'-phosphate binding.

It belongs to the class-III pyridoxal-phosphate-dependent aminotransferase family. ArgD subfamily. Homodimer. Pyridoxal 5'-phosphate serves as cofactor.

Its subcellular location is the cytoplasm. The enzyme catalyses N(2)-acetyl-L-ornithine + 2-oxoglutarate = N-acetyl-L-glutamate 5-semialdehyde + L-glutamate. It participates in amino-acid biosynthesis; L-arginine biosynthesis; N(2)-acetyl-L-ornithine from L-glutamate: step 4/4. This chain is Acetylornithine aminotransferase, found in Clostridium acetobutylicum (strain ATCC 824 / DSM 792 / JCM 1419 / IAM 19013 / LMG 5710 / NBRC 13948 / NRRL B-527 / VKM B-1787 / 2291 / W).